The following is a 314-amino-acid chain: Melanocyte-stimulating hormone receptor (314 aa).

Residues 1–35 are Extracellular-facing; that stretch reads MSMLAPLRLVREPWNASEGNQSNATAGAGGAWCQG. 3 N-linked (GlcNAc...) asparagine glycosylation sites follow: Asn15, Asn20, and Asn23. Residues 36–61 form a helical membrane-spanning segment; the sequence is LDIPNELFLTLGLVSLVENLLVVAAI. Residues 62 to 70 are Cytoplasmic-facing; sequence LKNRNLHSP. The helical transmembrane segment at 71–91 threads the bilayer; that stretch reads TYYFICCLAVSDMLVSVSNLA. The Extracellular segment spans residues 92 to 116; sequence KTLFMLLMEHGVLVIRASIVRHMDN. Residues 117 to 138 traverse the membrane as a helical segment; sequence VIDMLICSSVVSSLSFLGVIAV. Residues 139–161 are Cytoplasmic-facing; sequence DRYITIFYALRYHSIMTLQRAVV. The helical transmembrane segment at 162–181 threads the bilayer; it reads TMASVWLASTVSSTVLITYY. Over 182–189 the chain is Extracellular; that stretch reads RNNAILLC. The helical transmembrane segment at 190 to 209 threads the bilayer; it reads LIGFFLFMLVLMLVLYIHMF. The Cytoplasmic segment spans residues 210-237; sequence ALACHHVRSISSQQKQPTIYRTSSLKGA. Residues 238–263 form a helical membrane-spanning segment; the sequence is VTLTILLGVFFICWGPFFFHLILIVT. Topologically, residues 264-276 are extracellular; the sequence is CPTNPFCTCFFSY. A helical transmembrane segment spans residues 277–297; that stretch reads FNLFLILIICNSVVDPLIYAF. Over 298 to 314 the chain is Cytoplasmic; the sequence is RSQELRRTLREVVLCSW. A lipid anchor (S-palmitoyl cysteine) is attached at Cys312.

This sequence belongs to the G-protein coupled receptor 1 family.

Its subcellular location is the cell membrane. Functionally, receptor for MSH (alpha, beta and gamma) and ACTH. The activity of this receptor is mediated by G proteins which activate adenylate cyclase. Mediates melanogenesis via regulation of cAMP signaling in melanocytes. In Gallus gallus (Chicken), this protein is Melanocyte-stimulating hormone receptor (MC1R).